A 228-amino-acid chain; its full sequence is Phosphoribosylformylglycinamidine synthase subunit PurQ (228 aa).

Residues 3-226 (FAVVVFPGSN…VTYWRDAHVV (224 aa)) enclose the Glutamine amidotransferase type-1 domain. Cys-86 functions as the Nucleophile in the catalytic mechanism. Catalysis depends on residues His-195 and Glu-197.

As to quaternary structure, part of the FGAM synthase complex composed of 1 PurL, 1 PurQ and 2 PurS subunits.

The protein localises to the cytoplasm. It catalyses the reaction N(2)-formyl-N(1)-(5-phospho-beta-D-ribosyl)glycinamide + L-glutamine + ATP + H2O = 2-formamido-N(1)-(5-O-phospho-beta-D-ribosyl)acetamidine + L-glutamate + ADP + phosphate + H(+). The enzyme catalyses L-glutamine + H2O = L-glutamate + NH4(+). The protein operates within purine metabolism; IMP biosynthesis via de novo pathway; 5-amino-1-(5-phospho-D-ribosyl)imidazole from N(2)-formyl-N(1)-(5-phospho-D-ribosyl)glycinamide: step 1/2. Its function is as follows. Part of the phosphoribosylformylglycinamidine synthase complex involved in the purines biosynthetic pathway. Catalyzes the ATP-dependent conversion of formylglycinamide ribonucleotide (FGAR) and glutamine to yield formylglycinamidine ribonucleotide (FGAM) and glutamate. The FGAM synthase complex is composed of three subunits. PurQ produces an ammonia molecule by converting glutamine to glutamate. PurL transfers the ammonia molecule to FGAR to form FGAM in an ATP-dependent manner. PurS interacts with PurQ and PurL and is thought to assist in the transfer of the ammonia molecule from PurQ to PurL. This is Phosphoribosylformylglycinamidine synthase subunit PurQ from Anoxybacillus flavithermus (strain DSM 21510 / WK1).